Here is a 139-residue protein sequence, read N- to C-terminus: uncharacterized protein (139 aa).

A disordered region spans residues 1-116 (MYNPWQVGAS…TRPRVVARGK (116 aa)). Low complexity-rich tracts occupy residues 50-70 (RPRP…GPRP) and 84-110 (LPAY…TRPR).

This is an uncharacterized protein from Homo sapiens (Human).